A 139-amino-acid chain; its full sequence is Protein archease (139 aa).

Ca(2+) is bound by residues D12, D138, and I139.

The protein belongs to the archease family.

Activates the tRNA-splicing ligase complex by facilitating the enzymatic turnover of catalytic subunit RtcB. Acts by promoting the guanylylation of RtcB, a key intermediate step in tRNA ligation. Can also alter the NTP specificity of RtcB such that ATP, dGTP or ITP is used efficiently. This Saccharolobus islandicus (strain Y.N.15.51 / Yellowstone #2) (Sulfolobus islandicus) protein is Protein archease.